Consider the following 187-residue polypeptide: Acetyl-CoA decarbonylase/synthase complex subunit epsilon (187 aa).

The residue at position 1 (methionine 1) is a Blocked amino end (Met).

This sequence belongs to the CdhB family. In terms of assembly, heterotetramer of two alpha and two epsilon subunits. The ACDS complex is made up of alpha, epsilon, beta, gamma and delta subunits with a probable stoichiometry of (alpha(2)epsilon(2))(4)-beta(8)-(gamma(1)delta(1))(8).

In terms of biological role, part of a complex that catalyzes the reversible cleavage of acetyl-CoA, allowing autotrophic growth from CO(2). The alpha-epsilon subcomponent functions as a carbon monoxide dehydrogenase. The precise role of the epsilon subunit is unclear; it may have a stabilizing role within the alpha(2)epsilon(2) component and/or be involved in electron transfer to FAD during a potential FAD-mediated CO oxidation. This is Acetyl-CoA decarbonylase/synthase complex subunit epsilon from Methanothrix soehngenii (Methanosaeta concilii).